Reading from the N-terminus, the 278-residue chain is S-formylglutathione hydrolase YeiG (278 aa).

Residues Ser-145, Asp-223, and His-256 each act as charge relay system in the active site.

This sequence belongs to the esterase D family.

The enzyme catalyses S-formylglutathione + H2O = formate + glutathione + H(+). Its function is as follows. Serine hydrolase involved in the detoxification of formaldehyde. Hydrolyzes S-formylglutathione to glutathione and formate. The sequence is that of S-formylglutathione hydrolase YeiG (yeiG) from Escherichia coli O139:H28 (strain E24377A / ETEC).